A 178-amino-acid polypeptide reads, in one-letter code: Large ribosomal subunit protein uL6 (178 aa).

The protein belongs to the universal ribosomal protein uL6 family. In terms of assembly, part of the 50S ribosomal subunit.

Its function is as follows. This protein binds to the 23S rRNA, and is important in its secondary structure. It is located near the subunit interface in the base of the L7/L12 stalk, and near the tRNA binding site of the peptidyltransferase center. The sequence is that of Large ribosomal subunit protein uL6 from Corynebacterium kroppenstedtii (strain DSM 44385 / JCM 11950 / CIP 105744 / CCUG 35717).